The primary structure comprises 124 residues: Translation initiation factor 5A (124 aa).

Residue lysine 36 is modified to Hypusine.

This sequence belongs to the eIF-5A family.

Its subcellular location is the cytoplasm. Its function is as follows. Functions by promoting the formation of the first peptide bond. This is Translation initiation factor 5A from Haloquadratum walsbyi (strain DSM 16790 / HBSQ001).